The chain runs to 352 residues: C-X-C chemokine receptor type 4 (352 aa).

An important for chemokine binding and signaling region spans residues Met1–Tyr21. Over Met1 to Arg38 the chain is Extracellular. Tyr7 is modified (sulfotyrosine). A glycan (N-linked (GlcNAc...) asparagine) is linked at Asn11. Tyr12 is subject to Sulfotyrosine. Ser18 carries an O-linked (Xyl...) (chondroitin sulfate) serine glycan. Tyr21 carries the sulfotyrosine modification. 2 disulfide bridges follow: Cys28/Cys274 and Cys109/Cys186. The helical transmembrane segment at Ile39–Met63 threads the bilayer. Topologically, residues Gly64–Arg77 are cytoplasmic. A helical transmembrane segment spans residues Leu78–Val99. Positions Trp94–Asp97 are chemokine binding. Over Ala100–Lys110 the chain is Extracellular. Residues Ala111 to Ile130 form a helical membrane-spanning segment. Residues His113–Thr117 are chemokine binding. Residues Ser131–Lys154 lie on the Cytoplasmic side of the membrane. An Important for signaling motif is present at residues Asp133 to Tyr135. The involved in dimerization; when bound to chemokine stretch occupies residues Tyr135–Pro147. Residues Val155–Phe174 form a helical membrane-spanning segment. At Ala175–Trp195 the chain is on the extracellular side. The chemokine binding, important for signaling stretch occupies residues Cys186–Tyr190. The segment at Pro191–Leu210 is involved in dimerization. The chain crosses the membrane as a helical span at residues Val196–Leu216. Residues Ser217 to Thr241 lie on the Cytoplasmic side of the membrane. A helical transmembrane segment spans residues Val242 to Ile261. Residues Asp262 to Lys282 are Extracellular-facing. The tract at residues Leu266 to Glu268 is involved in dimerization. A helical transmembrane segment spans residues Trp283–Tyr302. The Cytoplasmic segment spans residues Ala303 to Ser352. A phosphoserine mark is found at Ser319 and Ser321. Residues Ser324 and Ser325 each carry the phosphoserine; by PKC and GRK6 modification. A disordered region spans residues Leu329–Ser352. A Phosphoserine; by GRK6 modification is found at Ser330. Lys331 participates in a covalent cross-link: Glycyl lysine isopeptide (Lys-Gly) (interchain with G-Cter in ubiquitin). Low complexity predominate over residues His337–Ser352. At Ser339 the chain carries Phosphoserine; by GRK6. 2 positions are modified to phosphoserine: Ser348 and Ser351.

The protein belongs to the G-protein coupled receptor 1 family. In terms of assembly, monomer. Can form homodimers. Interacts with CD164. Interacts with ARRB2; the interaction is dependent on the C-terminal phosphorylation of CXCR4 and allows activation of MAPK1 and MAPK3. Interacts with ARR3; the interaction is dependent on the C-terminal phosphorylation of CXCR4 and modulates calcium mobilization. Interacts with RNF113A; the interaction, enhanced by CXCL12, promotes CXCR4 ubiquitination and subsequent degradation. Interacts (via the cytoplasmic C-terminal) with ITCH (via the WW domains I and II); the interaction, enhanced by CXCL12, promotes CXCR4 ubiquitination and leads to its degradation. Interacts with extracellular ubiquitin. Interacts with DBN1; this interaction is enhanced by antigenic stimulation. Following LPS binding, may form a complex with GDF5, HSP90AA1 and HSPA8. Phosphorylated on agonist stimulation. Rapidly phosphorylated on serine and threonine residues in the C-terminal. Phosphorylation at Ser-324 and Ser-325 leads to recruitment of ITCH, ubiquitination and protein degradation. Post-translationally, ubiquitinated after ligand binding, leading to its degradation. Ubiquitinated by ITCH at the cell membrane on agonist stimulation. The ubiquitin-dependent mechanism, endosomal sorting complex required for transport (ESCRT), then targets CXCR4 for lysosomal degradation. This process is dependent also on prior Ser-/Thr-phosphorylation in the C-terminal of CXCR4. Also binding of ARRB1 to STAM negatively regulates CXCR4 sorting to lysosomes though modulating ubiquitination of SFR5S. In terms of processing, sulfation is required for efficient binding of CXCL12/SDF-1alpha and promotes its dimerization. O- and N-glycosylated. N-glycosylation can mask coreceptor function. The O-glycosylation chondroitin sulfate attachment does not affect interaction with CXCL12/SDF-1alpha nor its coreceptor activity.

It localises to the cell membrane. Its subcellular location is the cell junction. The protein localises to the early endosome. The protein resides in the late endosome. It is found in the lysosome. Its function is as follows. Receptor for the C-X-C chemokine CXCL12/SDF-1 that transduces a signal by increasing intracellular calcium ion levels and enhancing MAPK1/MAPK3 activation. Involved in the AKT signaling cascade. Plays a role in regulation of cell migration, e.g. during wound healing. Acts as a receptor for extracellular ubiquitin; leading to enhanced intracellular calcium ions and reduced cellular cAMP levels. Binds bacterial lipopolysaccharide (LPS) et mediates LPS-induced inflammatory response, including TNF secretion by monocytes. Involved in hematopoiesis and in cardiac ventricular septum formation. Also plays an essential role in vascularization of the gastrointestinal tract, probably by regulating vascular branching and/or remodeling processes in endothelial cells. Involved in cerebellar development. In the CNS, could mediate hippocampal-neuron survival. This is C-X-C chemokine receptor type 4 (CXCR4) from Callithrix jacchus (White-tufted-ear marmoset).